We begin with the raw amino-acid sequence, 1778 residues long: Internalin I (1778 aa).

Positions 1 to 28 (MKKKFSIVIISVLLLGYLAPFDTLLVGA) are cleaved as a signal peptide. The segment at 36–101 (DTAVKTAEAD…NIKTEINTDK (66 aa)) is disordered. A compositionally biased stretch (acidic residues) spans 51-62 (IESETGSDDETA). Residues 63–88 (EEPKEAKEAEASKETTEKEEKAKTEE) are compositionally biased toward basic and acidic residues. 27 LRR repeats span residues 155–179 (AISQ…EGLQ), 183–204 (NLTS…KDLV), 205–227 (NLVS…EDLV), 228–250 (NLQE…ASLP), 251–272 (VLKE…NPAG), 277–298 (ELET…AKLP), 299–321 (KLKN…NGAT), 322–344 (KLQL…SGLS), 345–367 (ELEM…KNLP), 368–389 (NLVN…NNLP), 390–412 (KLQT…TDLP), 413–434 (QLKT…DNLP), 435–456 (KLEK…TDLP), 457–478 (RLSY…KKLP), 479–500 (LLEW…TNFP), 501–522 (SLNY…TELP), 523–544 (SLKE…HDMP), 545–566 (NLRK…DNLP), 567–588 (KLQS…HDLP), 589–610 (SLET…DNLP), 611–632 (DLTY…GDLP), 633–653 (NLET…GTMD), 657–678 (KLRI…GNLS), 685–707 (NLTE…STLS), 708–729 (RLIY…SNLT), 730–751 (NLQE…SDLE), and 752–773 (NLNK…ANMV). One can recognise an LRRCT domain in the interval 785–872 (TYTLPTVLSY…SAAKVTADAE (88 aa)). 3 consecutive MucBP domains span residues 1510 to 1569 (DAAA…EQTV), 1575 to 1634 (AIKP…PQTI), and 1644 to 1705 (SKKS…SQTV). The disordered stretch occupies residues 1716–1742 (SKDDPKVKGKTNQPSSTDTKLKVDNNS). Residues 1725–1742 (KTNQPSSTDTKLKVDNNS) are compositionally biased toward polar residues. The LPXTG sorting signal motif lies at 1743–1747 (LPATG). Threonine 1746 is subject to Pentaglycyl murein peptidoglycan amidated threonine. Positions 1747 to 1778 (GDTENMILAVLIGFNMLIVASIFLFRKPKTNQ) are cleaved as a propeptide — removed by sortase.

It belongs to the internalin family.

The protein localises to the secreted. The protein resides in the cell wall. A role in virulence could not be demonstrated. This Listeria monocytogenes serovar 1/2a (strain ATCC BAA-679 / EGD-e) protein is Internalin I (inlI).